Reading from the N-terminus, the 362-residue chain is Phosphoserine aminotransferase (362 aa).

Arginine 42 lines the L-glutamate pocket. Residues 76-77 (AR), tryptophan 102, threonine 153, aspartate 174, and glutamine 197 each bind pyridoxal 5'-phosphate. Position 198 is an N6-(pyridoxal phosphate)lysine (lysine 198). 239 to 240 (NT) provides a ligand contact to pyridoxal 5'-phosphate.

The protein belongs to the class-V pyridoxal-phosphate-dependent aminotransferase family. SerC subfamily. In terms of assembly, homodimer. Pyridoxal 5'-phosphate serves as cofactor.

The protein localises to the cytoplasm. The enzyme catalyses O-phospho-L-serine + 2-oxoglutarate = 3-phosphooxypyruvate + L-glutamate. It catalyses the reaction 4-(phosphooxy)-L-threonine + 2-oxoglutarate = (R)-3-hydroxy-2-oxo-4-phosphooxybutanoate + L-glutamate. Its pathway is amino-acid biosynthesis; L-serine biosynthesis; L-serine from 3-phospho-D-glycerate: step 2/3. The protein operates within cofactor biosynthesis; pyridoxine 5'-phosphate biosynthesis; pyridoxine 5'-phosphate from D-erythrose 4-phosphate: step 3/5. In terms of biological role, catalyzes the reversible conversion of 3-phosphohydroxypyruvate to phosphoserine and of 3-hydroxy-2-oxo-4-phosphonooxybutanoate to phosphohydroxythreonine. This chain is Phosphoserine aminotransferase, found in Proteus mirabilis (strain HI4320).